Here is a 336-residue protein sequence, read N- to C-terminus: Ribosomal RNA small subunit methyltransferase C (336 aa).

The protein belongs to the methyltransferase superfamily. RsmC family. In terms of assembly, monomer.

It localises to the cytoplasm. The catalysed reaction is guanosine(1207) in 16S rRNA + S-adenosyl-L-methionine = N(2)-methylguanosine(1207) in 16S rRNA + S-adenosyl-L-homocysteine + H(+). Functionally, specifically methylates the guanine in position 1207 of 16S rRNA in the 30S particle. This chain is Ribosomal RNA small subunit methyltransferase C, found in Hamiltonella defensa subsp. Acyrthosiphon pisum (strain 5AT).